Here is a 248-residue protein sequence, read N- to C-terminus: 5'-nucleotidase SurE (248 aa).

A divalent metal cation is bound by residues Asp-8, Asp-9, Ser-39, and Asn-91.

Belongs to the SurE nucleotidase family. Requires a divalent metal cation as cofactor.

The protein localises to the cytoplasm. It catalyses the reaction a ribonucleoside 5'-phosphate + H2O = a ribonucleoside + phosphate. Functionally, nucleotidase that shows phosphatase activity on nucleoside 5'-monophosphates. The sequence is that of 5'-nucleotidase SurE from Neisseria meningitidis serogroup A / serotype 4A (strain DSM 15465 / Z2491).